Reading from the N-terminus, the 195-residue chain is Acireductone dioxygenase 2 (195 aa).

Fe(2+) is bound by residues His-94, His-96, Glu-100, and His-139. Ni(2+) contacts are provided by His-94, His-96, Glu-100, and His-139.

It belongs to the acireductone dioxygenase (ARD) family. Fe(2+) serves as cofactor. Requires Ni(2+) as cofactor.

It localises to the cytoplasm. The protein resides in the nucleus. The catalysed reaction is 1,2-dihydroxy-5-(methylsulfanyl)pent-1-en-3-one + O2 = 4-methylsulfanyl-2-oxobutanoate + formate + 2 H(+). It catalyses the reaction 1,2-dihydroxy-5-(methylsulfanyl)pent-1-en-3-one + O2 = 3-(methylsulfanyl)propanoate + CO + formate + 2 H(+). It participates in amino-acid biosynthesis; L-methionine biosynthesis via salvage pathway; L-methionine from S-methyl-5-thio-alpha-D-ribose 1-phosphate: step 5/6. Functionally, catalyzes 2 different reactions between oxygen and the acireductone 1,2-dihydroxy-3-keto-5-methylthiopentene (DHK-MTPene) depending upon the metal bound in the active site. Fe-containing acireductone dioxygenase (Fe-ARD) produces formate and 2-keto-4-methylthiobutyrate (KMTB), the alpha-ketoacid precursor of methionine in the methionine recycle pathway. Ni-containing acireductone dioxygenase (Ni-ARD) produces methylthiopropionate, carbon monoxide and formate, and does not lie on the methionine recycle pathway. The polypeptide is Acireductone dioxygenase 2 (Physcomitrium patens (Spreading-leaved earth moss)).